The primary structure comprises 250 residues: 3-deoxy-manno-octulosonate cytidylyltransferase (250 aa).

It belongs to the KdsB family.

It localises to the cytoplasm. It carries out the reaction 3-deoxy-alpha-D-manno-oct-2-ulosonate + CTP = CMP-3-deoxy-beta-D-manno-octulosonate + diphosphate. It functions in the pathway nucleotide-sugar biosynthesis; CMP-3-deoxy-D-manno-octulosonate biosynthesis; CMP-3-deoxy-D-manno-octulosonate from 3-deoxy-D-manno-octulosonate and CTP: step 1/1. Its pathway is bacterial outer membrane biogenesis; lipopolysaccharide biosynthesis. In terms of biological role, activates KDO (a required 8-carbon sugar) for incorporation into bacterial lipopolysaccharide in Gram-negative bacteria. The sequence is that of 3-deoxy-manno-octulosonate cytidylyltransferase from Francisella tularensis subsp. tularensis (strain FSC 198).